A 273-amino-acid polypeptide reads, in one-letter code: NLP effector protein 10 (273 aa).

The first 21 residues, 1-21 (MKLPTFLIGFVALLVTSNGSA), serve as a signal peptide directing secretion. N-linked (GlcNAc...) asparagine glycosylation is present at N91. The Conserved undecapeptide motif motif lies at 129 to 139 (AIMYAWYLPRA). A Conserved heptapeptide motif motif is present at residues 149 to 155 (GHRHYWL).

It belongs to the Necrosis inducing protein (NPP1) family.

It is found in the secreted. Functionally, secreted effector that acts as a pathogen-associated molecular pattern (PAMP) recognized by the plant immune system. Seems not to induce necrosis in Nicotiana benthamiana leaves but significantly improves disease resistance of Arabidopsis thaliana to Hyaloperonospora arabidopsidis and causes an inhibition of plant growth which is typically associated with enhanced immunity when over-expressed in Arabidopsis. The chain is NLP effector protein 10 from Plasmopara viticola (Downy mildew of grapevine).